The primary structure comprises 286 residues: B3 domain-containing protein REM20 (286 aa).

The segment at residues 9-102 (PRFFKVFLVE…TFEVSVFDRW (94 aa)) is a DNA-binding region (TF-B3). The tract at residues 117 to 161 (SDSDSDSVVEDEKDSTDVVEDDDDEDEDEDEDDDGSFDEDEEISQ) is disordered. Residues 119-159 (SDSDSVVEDEKDSTDVVEDDDDEDEDEDEDDDGSFDEDEEI) show a composition bias toward acidic residues.

It localises to the nucleus. The sequence is that of B3 domain-containing protein REM20 (REM20) from Arabidopsis thaliana (Mouse-ear cress).